We begin with the raw amino-acid sequence, 771 residues long: Transducin-like enhancer protein 3-B (771 aa).

Positions 1 to 141 are q domain; it reads MYPQGRHPAP…PLTQQQLQAQ (141 aa). Low complexity predominate over residues 137–148; the sequence is QLQAQHLSHAAH. 2 disordered regions span residues 137–174 and 196–360; these read QLQAQHLSHAAHGPPVQLPPHPSGLQPPGIPPVTGSGS and HHDL…MEAL. Residues 142-209 form a GP domain region; that stretch reads HLSHAAHGPP…EHRERESSTN (68 aa). A compositionally biased stretch (basic and acidic residues) spans 196–206; sequence HHDLEHRERES. The span at 207-217 shows a compositional bias: low complexity; sequence STNNSVSPSDS. Residues 210 to 278 are ccN domain; it reads NSVSPSDSLR…TPRVSPSHSP (69 aa). Basic and acidic residues-rich tracts occupy residues 219 to 257 and 282 to 293; these read RASEKHRGSSEYSLDPKKRRVEEKDNMSRYDSDGDKSDD and GLDKARALKKDA. The short motif at 235–238 is the Nuclear localization signal element; it reads KKRR. The segment at 279-451 is SP domain; that stretch reads PENGLDKARA…GGKPAYSFHV (173 aa). The segment covering 294-309 has biased composition (low complexity); that stretch reads PNSPASVASSGSTPSS. A phosphoserine mark is found at S296 and S299. A compositionally biased stretch (basic and acidic residues) spans 310-319; that stretch reads KAKDHPHNDK. The segment covering 320-332 has biased composition (polar residues); the sequence is SSTPGLKSNTPTP. WD repeat units follow at residues 483–521, 529–568, 573–612, 615–654, 656–695, 697–736, and 738–771; these read SHGEVVCAVTISNPTRHVYTGGKGCVKIWDISQPGSKSP, NRDNYIRSCKLLPDGRTLIVGGEASTLTIWDLASQTPRIK, SSAPACYALAISPDAKVCFSCCSDGNIAVWDLHNQTLVRQ, GHTDGASCIDISHDGTKLWTGGLDNTVRSWDLREGRQLQQ, DFTSQIFSLGYCPTGEWLAVGMESSNVEVLHHTKPDKYQL, LHESCVLSLKFAYCGKWFVSTGKDNLLNAWRTPYGASIFQ, and KESSSVLSCDISADDKYIVTGSGDKKATVYEVIY.

It belongs to the WD repeat Groucho/TLE family. As to expression, at gastrulation, expression is absent within the axial mesoderm. After gastrulation is complete, expressed in the presomitic mesoderm, but expression in the tailbud doesn't begin until the six to seven somite stage, after which it becomes abundant. Expression is abundant throughout somitogenesis within the posterior half of the somites, but is absent from older somites. Also expressed in a dynamic manner within the neural plate.

Its subcellular location is the nucleus. In terms of biological role, transcriptional corepressor that binds to a number of transcription factors. Inhibits the transcriptional activation mediated by CTNNB1 and TCF family members in Wnt signaling. The effects of full-length TLE family members may be modulated by association with dominant-negative AES. The chain is Transducin-like enhancer protein 3-B from Danio rerio (Zebrafish).